Reading from the N-terminus, the 480-residue chain is RAC-alpha serine/threonine-protein kinase (480 aa).

One can recognise a PH domain in the interval 5–108 (AIVKEGWLHK…WATAIQTVAD (104 aa)). 2 positions are modified to N6-acetyllysine: Lys-14 and Lys-20. 14-19 (KRGEYI) contacts 1D-myo-inositol 1,3,4,5-tetrakisphosphate. 1D-myo-inositol 1,3,4,5-tetrakisphosphate-binding positions include 23–25 (RPR) and Asn-53. Cys-60 and Cys-77 form a disulfide bridge. A 1D-myo-inositol 1,3,4,5-tetrakisphosphate-binding site is contributed by Arg-86. The segment at 114-137 (EEETMDFRSGSPSDNSGAEEMEVS) is disordered. The residue at position 124 (Ser-124) is a Phosphoserine. Phosphoserine; alternate occurs at positions 126 and 129. 2 O-linked (GlcNAc) serine; alternate glycosylation sites follow: Ser-126 and Ser-129. The Protein kinase domain occupies 150-408 (FEYLKLLGKG…AKEIMQHRFF (259 aa)). 156 to 164 (LGKGTFGKV) lines the ATP pocket. Residue Tyr-176 is modified to Phosphotyrosine; by TNK2. Residue Lys-179 coordinates ATP. The Proton acceptor role is filled by Asp-274. Lys-284 is covalently cross-linked (Glycyl lysine isopeptide (Lys-Gly) (interchain with G-Cter in ubiquitin)). Cys-296 and Cys-310 are disulfide-bonded. Residue Thr-305 is glycosylated (O-linked (GlcNAc) threonine). Thr-308 is subject to Phosphothreonine; by IKKE, PDPK1 and TBK1. Thr-312 carries O-linked (GlcNAc) threonine glycosylation. Residues 409 to 480 (ANIVWQDVYE…QFSYSASGTA (72 aa)) form the AGC-kinase C-terminal domain. Thr-448 is subject to Phosphothreonine. Thr-450 carries the phosphothreonine; by MTOR modification. The segment at 450 to 480 (TPPDQDDSMECVDSERRPHFPQFSYSASGTA) is disordered. Ser-473 carries an O-linked (GlcNAc) serine; alternate glycan. Ser-473 is subject to Phosphoserine; by IKKE, MTOR, PRKDC and TBK1; alternate. Tyr-474 is subject to Phosphotyrosine. Residue Ser-477 is modified to Phosphoserine; by CDK2 and MTOR. Phosphothreonine; by CDK2 and MTOR is present on Thr-479.

This sequence belongs to the protein kinase superfamily. AGC Ser/Thr protein kinase family. RAC subfamily. As to quaternary structure, interacts with and phosphorylated by PDPK1. Interacts with AGAP2 (isoform 2/PIKE-A); the interaction occurs in the presence of guanine nucleotides. Interacts with AKTIP. Interacts (via PH domain) with MTCP1, TCL1A and TCL1B. Interacts with CDKN1B; the interaction phosphorylates CDKN1B promoting 14-3-3 binding and cell-cycle progression. Interacts with MAP3K5 and TRAF6. Interacts with BAD, PPP2R5B, STK3 and STK4. Interacts (via PH domain) with SIRT1. Interacts with SRPK2 in a phosphorylation-dependent manner. Interacts with TRIM13; the interaction ubiquitinates AKT1 leading to its proteasomal degradation. Interacts with RAF1. Interacts (via the C-terminus) with CCDC88A (via its C-terminus) and THEM4 (via its C-terminus). Interacts with GRB10; the interaction leads to GRB10 phosphorylation thus promoting YWHAE-binding. Interacts with KCTD20. Interacts with BTBD10. Interacts with PA2G4. Interacts with KIF14; the interaction is detected in the plasma membrane upon INS stimulation and promotes AKT1 phosphorylation. Interacts with FAM83B; activates the PI3K/AKT signaling cascade. Interacts with WDFY2 (via WD repeats 1-3). Forms a complex with WDFY2 and FOXO1. Interacts with FAM168A. Interacts with SYAP1 (via phosphorylated form and BSD domain); this interaction is enhanced in a mTORC2-mediated manner in response to epidermal growth factor (EGF) stimulation and activates AKT1. Interacts with PKHM3. Interacts with FKBP5/FKBP51; promoting interaction between Akt/AKT1 and PHLPP1, thereby enhancing dephosphorylation and subsequent activation of Akt/AKT1. Interacts with TMEM175; leading to formation of the lysoK(GF) complex. In terms of processing, O-GlcNAcylation at Thr-305 and Thr-312 inhibits activating phosphorylation at Thr-308 via disrupting the interaction between AKT1 and PDPK1. O-GlcNAcylation at Ser-473 also probably interferes with phosphorylation at this site. Post-translationally, phosphorylation on Thr-308, Ser-473 and Tyr-474 is required for full activity. Phosphorylation of the activation loop at Thr-308 by PDPK1/PDK1 is a prerequisite for full activation. Phosphorylation by mTORC2 in response to growth factors plays a key role in AKT1 activation: mTORC2 phosphorylates different sites depending on the context, such as Thr-450, Ser-473, Ser-477 or Thr-479, thereby facilitating subsequent phosphorylation of the activation loop by PDPK1/PDK1. Phosphorylation at Ser-473 by mTORC2 promotes ubiquitination and degradation by the proteasome. Also phosphorylated at Ser-477 and Thr-479 by CDK2, facilitating subsequent phosphorylation of the activation loop by PDPK1/PDK1. Activated TNK2 phosphorylates it on Tyr-176 resulting in its binding to the anionic plasma membrane phospholipid PA. This phosphorylated form localizes to the cell membrane, where it is targeted by PDPK1 and PDPK2 for further phosphorylations on Thr-308 and Ser-473 leading to its activation. Phosphorylated at Thr-308 and Ser-473 by IKBKE and TBK1. Ser-473 phosphorylation is enhanced by interaction with AGAP2 isoform 2 (PIKE-A). Ser-473 phosphorylation is enhanced by signaling through activated FLT3. Ser-473 is dephosphorylated by PHLPP. Dephosphorylated at Thr-308 and Ser-473 by PP2A phosphatase. The phosphorylated form of PPP2R5B is required for bridging AKT1 with PP2A phosphatase. Ser-473 is dephosphorylated by CPPED1, leading to termination of signaling. AIM2 acts as an inhibitor of AKT1 by inhibiting phosphorylation Ser-473: AIM2 acts both by inhibiting the activity of PRKDC/DNA-PK kinase and promoting dephosphorylation by PP2A phosphatase. Ubiquitinated; undergoes both 'Lys-48'- and 'Lys-63'-linked polyubiquitination. TRAF6-induced 'Lys-63'-linked AKT1 ubiquitination is critical for phosphorylation and activation. When ubiquitinated, it translocates to the plasma membrane, where it becomes phosphorylated. When fully phosphorylated and translocated into the nucleus, undergoes 'Lys-48'-polyubiquitination catalyzed by TTC3, leading to its degradation by the proteasome. Also ubiquitinated by TRIM13 leading to its proteasomal degradation. Ubiquitinated via 'Lys-48'-linked polyubiquitination by ZNRF1, leading to its degradation by the proteasome. Phosphorylated, undergoes 'Lys-48'-linked polyubiquitination preferentially at Lys-284 catalyzed by MUL1, leading to its proteasomal degradation. In terms of processing, acetylated on Lys-14 and Lys-20 by the histone acetyltransferases EP300 and KAT2B. Acetylation results in reduced phosphorylation and inhibition of activity. Deacetylated at Lys-14 and Lys-20 by SIRT1. SIRT1-mediated deacetylation relieves the inhibition. Post-translationally, cleavage by caspase-3/CASP3. Cleaved at the caspase-3 consensus site Asp-462 during apoptosis, resulting in down-regulation of the AKT signaling pathway and decreased cell survival. As to expression, widely expressed. Low levels found in liver with slightly higher levels present in thymus and testis.

It localises to the cytoplasm. Its subcellular location is the nucleus. It is found in the cell membrane. The protein localises to the mitochondrion intermembrane space. It carries out the reaction L-seryl-[protein] + ATP = O-phospho-L-seryl-[protein] + ADP + H(+). The enzyme catalyses L-threonyl-[protein] + ATP = O-phospho-L-threonyl-[protein] + ADP + H(+). Three specific sites, one in the kinase domain (Thr-308) and the two other ones in the C-terminal regulatory region (Ser-473 and Tyr-474), need to be phosphorylated for its full activation. Its function is as follows. AKT1 is one of 3 closely related serine/threonine-protein kinases (AKT1, AKT2 and AKT3) called the AKT kinase, and which regulate many processes including metabolism, proliferation, cell survival, growth and angiogenesis. This is mediated through serine and/or threonine phosphorylation of a range of downstream substrates. Over 100 substrate candidates have been reported so far, but for most of them, no isoform specificity has been reported. AKT is responsible of the regulation of glucose uptake by mediating insulin-induced translocation of the SLC2A4/GLUT4 glucose transporter to the cell surface. Phosphorylation of PTPN1 at 'Ser-50' negatively modulates its phosphatase activity preventing dephosphorylation of the insulin receptor and the attenuation of insulin signaling. Phosphorylation of TBC1D4 triggers the binding of this effector to inhibitory 14-3-3 proteins, which is required for insulin-stimulated glucose transport. AKT also regulates the storage of glucose in the form of glycogen by phosphorylating GSK3A at 'Ser-21' and GSK3B at 'Ser-9', resulting in inhibition of its kinase activity. Phosphorylation of GSK3 isoforms by AKT is also thought to be one mechanism by which cell proliferation is driven. AKT also regulates cell survival via the phosphorylation of MAP3K5 (apoptosis signal-related kinase). Phosphorylation of 'Ser-83' decreases MAP3K5 kinase activity stimulated by oxidative stress and thereby prevents apoptosis. AKT mediates insulin-stimulated protein synthesis by phosphorylating TSC2 at 'Ser-939' and 'Thr-1462', thereby activating the mTORC1 signaling pathway, and leading to both phosphorylation of 4E-BP1 and in activation of RPS6KB1. Also regulates the mTORC1 signaling pathway by catalyzing phosphorylation of CASTOR1 and DEPDC5. AKT plays a role as key modulator of the AKT-mTOR signaling pathway controlling the tempo of the process of newborn neurons integration during adult neurogenesis, including correct neuron positioning, dendritic development and synapse formation. Part of a positive feedback loop of mTORC2 signaling by mediating phosphorylation of MAPKAP1/SIN1, promoting mTORC2 activation. AKT is involved in the phosphorylation of members of the FOXO factors (Forkhead family of transcription factors), leading to binding of 14-3-3 proteins and cytoplasmic localization. In particular, FOXO1 is phosphorylated at 'Thr-24', 'Ser-256' and 'Ser-319'. FOXO3 and FOXO4 are phosphorylated on equivalent sites. AKT has an important role in the regulation of NF-kappa-B-dependent gene transcription and positively regulates the activity of CREB1 (cyclic AMP (cAMP)-response element binding protein). The phosphorylation of CREB1 induces the binding of accessory proteins that are necessary for the transcription of pro-survival genes such as BCL2 and MCL1. AKT phosphorylates 'Ser-454' on ATP citrate lyase (ACLY), thereby potentially regulating ACLY activity and fatty acid synthesis. Activates the 3B isoform of cyclic nucleotide phosphodiesterase (PDE3B) via phosphorylation of 'Ser-273', resulting in reduced cyclic AMP levels and inhibition of lipolysis. Phosphorylates PIKFYVE on 'Ser-318', which results in increased PI(3)P-5 activity. The Rho GTPase-activating protein DLC1 is another substrate and its phosphorylation is implicated in the regulation cell proliferation and cell growth. Signals downstream of phosphatidylinositol 3-kinase (PI(3)K) to mediate the effects of various growth factors such as platelet-derived growth factor (PDGF), epidermal growth factor (EGF), insulin and insulin-like growth factor 1 (IGF1). AKT mediates the antiapoptotic effects of IGF1. Essential for the SPATA13-mediated regulation of cell migration and adhesion assembly and disassembly. May be involved in the regulation of the placental development. Phosphorylates STK4/MST1 at 'Thr-120' and 'Thr-387' leading to inhibition of its: kinase activity, nuclear translocation, autophosphorylation and ability to phosphorylate FOXO3. Phosphorylates STK3/MST2 at 'Thr-117' and 'Thr-384' leading to inhibition of its: cleavage, kinase activity, autophosphorylation at Thr-180, binding to RASSF1 and nuclear translocation. Phosphorylates SRPK2 and enhances its kinase activity towards SRSF2 and ACIN1 and promotes its nuclear translocation. Phosphorylates RAF1 at 'Ser-259' and negatively regulates its activity. Phosphorylation of BAD stimulates its pro-apoptotic activity. Phosphorylates KAT6A at 'Thr-369' and this phosphorylation inhibits the interaction of KAT6A with PML and negatively regulates its acetylation activity towards p53/TP53. Phosphorylates palladin (PALLD), modulating cytoskeletal organization and cell motility. Phosphorylates prohibitin (PHB), playing an important role in cell metabolism and proliferation. Phosphorylates CDKN1A, for which phosphorylation at 'Thr-145' induces its release from CDK2 and cytoplasmic relocalization. These recent findings indicate that the AKT1 isoform has a more specific role in cell motility and proliferation. Phosphorylates CLK2 thereby controlling cell survival to ionizing radiation. Phosphorylates PCK1 at 'Ser-90', reducing the binding affinity of PCK1 to oxaloacetate and changing PCK1 into an atypical protein kinase activity using GTP as donor. Also acts as an activator of TMEM175 potassium channel activity in response to growth factors: forms the lysoK(GF) complex together with TMEM175 and acts by promoting TMEM175 channel activation, independently of its protein kinase activity. Acts as a negative regulator of the cGAS-STING pathway by mediating phosphorylation of CGAS during mitosis, leading to its inhibition. Acts as a regulator of mitochondrial calcium uptake by mediating phosphorylation of MICU1 in the mitochondrial intermembrane space, impairing MICU1 maturation. Acts as an inhibitor of tRNA methylation by mediating phosphorylation of the N-terminus of METTL1, thereby inhibiting METTL1 methyltransferase activity. In response to LPAR1 receptor pathway activation, phosphorylates Rabin8/RAB3IP which alters its activity and phosphorylates WDR44 which induces WDR44 binding to Rab11, thereby switching Rab11 vesicular function from preciliary trafficking to endocytic recycling. This chain is RAC-alpha serine/threonine-protein kinase (Akt1), found in Mus musculus (Mouse).